We begin with the raw amino-acid sequence, 508 residues long: Aromatase (508 aa).

C437 contacts heme.

Belongs to the cytochrome P450 family. Heme serves as cofactor.

Its subcellular location is the membrane. The catalysed reaction is testosterone + 3 reduced [NADPH--hemoprotein reductase] + 3 O2 = 17beta-estradiol + formate + 3 oxidized [NADPH--hemoprotein reductase] + 4 H2O + 4 H(+). The enzyme catalyses androst-4-ene-3,17-dione + 3 reduced [NADPH--hemoprotein reductase] + 3 O2 = estrone + formate + 3 oxidized [NADPH--hemoprotein reductase] + 4 H2O + 4 H(+). Catalyzes the formation of aromatic C18 estrogens from C19 androgens. The polypeptide is Aromatase (Cyp19a1) (Rattus norvegicus (Rat)).